The chain runs to 228 residues: Urease subunit gamma/beta (228 aa).

A urease gamma region spans residues M1–G101. Residues A102–Q228 form a urease beta region.

The protein in the N-terminal section; belongs to the urease gamma subunit family. This sequence in the C-terminal section; belongs to the urease beta subunit family. As to quaternary structure, heterohexamer of 3 UreC (alpha) and 3 UreAB (gamma/beta) subunits.

It localises to the cytoplasm. It catalyses the reaction urea + 2 H2O + H(+) = hydrogencarbonate + 2 NH4(+). Its pathway is nitrogen metabolism; urea degradation; CO(2) and NH(3) from urea (urease route): step 1/1. The chain is Urease subunit gamma/beta from Deinococcus radiodurans (strain ATCC 13939 / DSM 20539 / JCM 16871 / CCUG 27074 / LMG 4051 / NBRC 15346 / NCIMB 9279 / VKM B-1422 / R1).